The following is a 329-amino-acid chain: Putative glucose ABC transporter permease protein TsgC13 (329 aa).

A run of 7 helical transmembrane segments spans residues 3 to 23, 32 to 52, 60 to 80, 89 to 109, 139 to 161, 193 to 213, and 216 to 236; these read FAAGLLNATVQAATVLLLAGL, GVLNLGVEGMMLVGALGGFVV, WLGFGVGIACGMALAAVHAFL, VISGVMLTLLGTGLTTFFGSG, AFFRSTATDYLALLAVPVVWFFL, LAVIIGGGFAGAAGAHLSLAF, and LWVPGMTVGRGWIAVALVVFA.

Belongs to the binding-protein-dependent transport system permease family. The complex is composed of two ATP-binding proteins (TsgD13), two transmembrane proteins (TsgB13 and TsgC13) and a solute-binding protein (TsgA13).

Its subcellular location is the cell membrane. Functionally, part of an ABC transporter complex involved in glucose import (Potential). Responsible for the translocation of the substrate across the membrane. The chain is Putative glucose ABC transporter permease protein TsgC13 (tsgC13) from Haloferax volcanii (strain ATCC 29605 / DSM 3757 / JCM 8879 / NBRC 14742 / NCIMB 2012 / VKM B-1768 / DS2) (Halobacterium volcanii).